The following is a 192-amino-acid chain: Protein GrpE (192 aa).

The segment at Met-1–Cys-34 is disordered. A compositionally biased stretch (polar residues) spans Thr-20–Thr-31.

The protein belongs to the GrpE family. Homodimer.

The protein localises to the cytoplasm. Functionally, participates actively in the response to hyperosmotic and heat shock by preventing the aggregation of stress-denatured proteins, in association with DnaK and GrpE. It is the nucleotide exchange factor for DnaK and may function as a thermosensor. Unfolded proteins bind initially to DnaJ; upon interaction with the DnaJ-bound protein, DnaK hydrolyzes its bound ATP, resulting in the formation of a stable complex. GrpE releases ADP from DnaK; ATP binding to DnaK triggers the release of the substrate protein, thus completing the reaction cycle. Several rounds of ATP-dependent interactions between DnaJ, DnaK and GrpE are required for fully efficient folding. In Yersinia pestis, this protein is Protein GrpE.